Consider the following 379-residue polypeptide: UDP-4-amino-4-deoxy-L-arabinose--oxoglutarate aminotransferase (379 aa).

K182 carries the N6-(pyridoxal phosphate)lysine modification.

The protein belongs to the DegT/DnrJ/EryC1 family. ArnB subfamily. As to quaternary structure, homodimer. Pyridoxal 5'-phosphate is required as a cofactor.

It carries out the reaction UDP-4-amino-4-deoxy-beta-L-arabinose + 2-oxoglutarate = UDP-beta-L-threo-pentopyranos-4-ulose + L-glutamate. Its pathway is nucleotide-sugar biosynthesis; UDP-4-deoxy-4-formamido-beta-L-arabinose biosynthesis; UDP-4-deoxy-4-formamido-beta-L-arabinose from UDP-alpha-D-glucuronate: step 2/3. The protein operates within bacterial outer membrane biogenesis; lipopolysaccharide biosynthesis. Its function is as follows. Catalyzes the conversion of UDP-4-keto-arabinose (UDP-Ara4O) to UDP-4-amino-4-deoxy-L-arabinose (UDP-L-Ara4N). The modified arabinose is attached to lipid A and is required for resistance to polymyxin and cationic antimicrobial peptides. The protein is UDP-4-amino-4-deoxy-L-arabinose--oxoglutarate aminotransferase of Escherichia coli O7:K1 (strain IAI39 / ExPEC).